A 303-amino-acid polypeptide reads, in one-letter code: Regulatory protein PocR (303 aa).

The region spanning Lys-195 to Gln-293 is the HTH araC/xylS-type domain. 2 consecutive DNA-binding regions (H-T-H motif) follow at residues Glu-212–Gln-233 and Ile-260–Tyr-283.

Its pathway is cofactor biosynthesis; adenosylcobalamin biosynthesis [regulation]. The protein operates within polyol metabolism; 1,2-propanediol degradation [regulation]. In terms of biological role, positive regulatory protein of pdu and cob operons. Positively autoregulates its own expression. The sequence is that of Regulatory protein PocR (pocR) from Salmonella typhimurium (strain LT2 / SGSC1412 / ATCC 700720).